Reading from the N-terminus, the 133-residue chain is Vascular endothelial growth factor homolog (133 aa).

The first 20 residues, 1-20 (MKLLVGILVAVCLHQYLLNA), serve as a signal peptide directing secretion. Cystine bridges form between cysteine 36/cysteine 78, cysteine 67/cysteine 112, and cysteine 71/cysteine 114. Asparagine 85 is a glycosylation site (N-linked (GlcNAc...) asparagine; by host).

Belongs to the PDGF/VEGF growth factor family. Homodimer; disulfide-linked.

The protein resides in the secreted. In terms of biological role, induces endothelial proliferation. This is Vascular endothelial growth factor homolog from Orf virus (strain NZ2) (OV NZ-2).